The following is a 474-amino-acid chain: Protein IFIT1 homolog B (474 aa).

10 TPR repeats span residues 52-85, 95-128, 141-174, 182-216, 218-250, 251-284, 305-339, 340-373, 378-412, and 437-470; these read VGIH…IQKE, LVTW…CKKF, VDCE…NPEN, AITV…NPDD, YIRV…ISSQ, AYVF…TPTS, ATNW…KRTF, EMAY…KIFE, QEIH…EKMS, and VESV…AADL.

It belongs to the IFIT family.

Its function is as follows. IFIT1B is likely non-functional, lacking the critical antiviral role of IFIT1. Unlike IFIT1, which is essential in the innate immune response as part of an interferon-dependent multiprotein complex, IFIT1B does not prevent the translation of viral RNAs that lack host-specific 2'-O-methylation at their 5' cap. Consequently, it probably cannot inhibit their translation by competing with the host translation machinery. This chain is Protein IFIT1 homolog B, found in Homo sapiens (Human).